Consider the following 351-residue polypeptide: Photosystem II D2 protein (351 aa).

Residues 39–59 (TAYLAVGGWFTGTTFVTSWYT) traverse the membrane as a helical segment. His116 serves as a coordination point for chlorophyll a. The helical transmembrane segment at 123–139 (GFCLRQFEIARLVGIRP) threads the bilayer. Pheophytin a contacts are provided by Gln128 and Asn141. The chain crosses the membrane as a helical span at residues 151–164 (IFVSVFLLYPLGQA). His196 is a binding site for chlorophyll a. The helical transmembrane segment at 206-226 (GALLCAIHGATVENTLFEDGD) threads the bilayer. Residues His213 and Phe260 each contribute to the a plastoquinone site. His213 is a Fe cation binding site. His267 is a Fe cation binding site. The helical transmembrane segment at 277–293 (GLWTSAIGIVGLALNLR) threads the bilayer.

Belongs to the reaction center PufL/M/PsbA/D family. As to quaternary structure, PSII is composed of 1 copy each of membrane proteins PsbA, PsbB, PsbC, PsbD, PsbE, PsbF, PsbH, PsbI, PsbJ, PsbK, PsbL, PsbM, PsbT, PsbX, PsbY, PsbZ, Psb30/Ycf12, at least 3 peripheral proteins of the oxygen-evolving complex and a large number of cofactors. It forms dimeric complexes. The cofactor is The D1/D2 heterodimer binds P680, chlorophylls that are the primary electron donor of PSII, and subsequent electron acceptors. It shares a non-heme iron and each subunit binds pheophytin, quinone, additional chlorophylls, carotenoids and lipids. There is also a Cl(-1) ion associated with D1 and D2, which is required for oxygen evolution. The PSII complex binds additional chlorophylls, carotenoids and specific lipids..

The protein resides in the plastid. It localises to the chloroplast thylakoid membrane. It catalyses the reaction 2 a plastoquinone + 4 hnu + 2 H2O = 2 a plastoquinol + O2. Photosystem II (PSII) is a light-driven water:plastoquinone oxidoreductase that uses light energy to abstract electrons from H(2)O, generating O(2) and a proton gradient subsequently used for ATP formation. It consists of a core antenna complex that captures photons, and an electron transfer chain that converts photonic excitation into a charge separation. The D1/D2 (PsbA/PsbD) reaction center heterodimer binds P680, the primary electron donor of PSII as well as several subsequent electron acceptors. D2 is needed for assembly of a stable PSII complex. The protein is Photosystem II D2 protein of Heterosigma akashiwo (strain NIES-293 / 8280G21-1).